Here is a 270-residue protein sequence, read N- to C-terminus: Regulatory protein RecX (270 aa).

The protein belongs to the RecX family.

It is found in the cytoplasm. Functionally, modulates RecA activity. The chain is Regulatory protein RecX from Bacillus cytotoxicus (strain DSM 22905 / CIP 110041 / 391-98 / NVH 391-98).